We begin with the raw amino-acid sequence, 297 residues long: Protoheme IX farnesyltransferase (297 aa).

The next 9 membrane-spanning stretches (helical) occupy residues V26–V46, Y48–V68, F96–F116, L120–L140, N147–T167, A174–L194, L218–Y238, I243–L263, and F276–F296.

This sequence belongs to the UbiA prenyltransferase family. Protoheme IX farnesyltransferase subfamily.

The protein localises to the cell membrane. It carries out the reaction heme b + (2E,6E)-farnesyl diphosphate + H2O = Fe(II)-heme o + diphosphate. Its pathway is porphyrin-containing compound metabolism; heme O biosynthesis; heme O from protoheme: step 1/1. Converts heme B (protoheme IX) to heme O by substitution of the vinyl group on carbon 2 of heme B porphyrin ring with a hydroxyethyl farnesyl side group. The polypeptide is Protoheme IX farnesyltransferase (Polynucleobacter asymbioticus (strain DSM 18221 / CIP 109841 / QLW-P1DMWA-1) (Polynucleobacter necessarius subsp. asymbioticus)).